Consider the following 26-residue polypeptide: M-poneritoxin-Ng1c (26 aa).

As to expression, expressed by the venom gland.

It localises to the secreted. The protein localises to the target cell membrane. Has a broad spectrum of activity against both Gram-positive and Gram-negative bacteria and S.cerevisiae. Has insecticidal and hemolytic activities. May act by disrupting the integrity of the bacterial cell membrane. The protein is M-poneritoxin-Ng1c of Neoponera goeldii (Ponerine ant).